The following is a 79-amino-acid chain: RNA-binding protein Hfq (79 aa).

Residues 10–69 (DPFLNALRKEHVPVSIYLVNGIKLQGNIESFDQYVVLLRNTVTQMVYKHAISTVVPARPV) enclose the Sm domain.

It belongs to the Hfq family. In terms of assembly, homohexamer.

RNA chaperone that binds small regulatory RNA (sRNAs) and mRNAs to facilitate mRNA translational regulation in response to envelope stress, environmental stress and changes in metabolite concentrations. Also binds with high specificity to tRNAs. The protein is RNA-binding protein Hfq of Burkholderia cenocepacia (strain HI2424).